Reading from the N-terminus, the 373-residue chain is SH3 domain-binding protein 5-like (373 aa).

The segment at 1 to 36 (MEGKEGPPCEVRLPTPGAEREGPVHPELGAFGESAS) is disordered. Coiled coils occupy residues 35–98 (ASDA…ESAR) and 170–258 (WQEM…KLRY). 2 disordered regions span residues 274–308 (ARRT…PADT) and 332–373 (DLTD…SVSL). Residues 332–360 (DLTDVTSLDGRETGAVESGGSRERGEDRG) show a composition bias toward basic and acidic residues.

Belongs to the SH3BP5 family.

Its function is as follows. Functions as a guanine nucleotide exchange factor (GEF) for rab11a. The protein is SH3 domain-binding protein 5-like (sh3bp5l) of Xenopus laevis (African clawed frog).